The primary structure comprises 226 residues: Clarin-3 (226 aa).

Residues 8–28 (LMFLSGFLTSLGSVVVICSIL) form a helical membrane-spanning segment. 2 N-linked (GlcNAc...) asparagine glycosylation sites follow: Asn46 and Asn83. 3 helical membrane-spanning segments follow: residues 92–112 (VVII…MFTF), 128–148 (GVYT…VLFV), and 181–201 (FWLI…IIFY).

This sequence belongs to the clarin family.

Its subcellular location is the membrane. The protein is Clarin-3 (Clrn3) of Rattus norvegicus (Rat).